Reading from the N-terminus, the 139-residue chain is MASLFRSYLPAIWLLLSQLLRESLAAELRGCGPRFGKHLLSYCPMPEKTFTTTPGGWLLESGRPKEMVSTSNNKDGQALGTTSEFIPNLSPELKKPLSEGQPSLKKIILSRKKRSGRHRFDPFCCEVICDDGTSVKLCT.

The N-terminal stretch at 1 to 25 (MASLFRSYLPAIWLLLSQLLRESLA) is a signal peptide. 3 disulfide bridges follow: Cys31-Cys125, Cys43-Cys138, and Cys124-Cys129. Residues 59-114 (LESGRPKEMVSTSNNKDGQALGTTSEFIPNLSPELKKPLSEGQPSLKKIILSRKKR) constitute a propeptide, c peptide.

The protein belongs to the insulin family. In terms of tissue distribution, expressed in placenta, uterus and in fetal perichondrium. Expression levels were increased in both early placentas and molar pregnancies and were reduced in choriocarcinoma cells.

It is found in the secreted. Functionally, may play an important role in trophoblast development and in the regulation of bone formation. This chain is Early placenta insulin-like peptide (INSL4), found in Homo sapiens (Human).